Consider the following 313-residue polypeptide: Acetaldehyde dehydrogenase 3 (313 aa).

Residue 11 to 14 (SGNI) coordinates NAD(+). The active-site Acyl-thioester intermediate is Cys-129. NAD(+) contacts are provided by residues 160–168 (SAGPGTRAN) and Asn-288.

It belongs to the acetaldehyde dehydrogenase family.

It catalyses the reaction acetaldehyde + NAD(+) + CoA = acetyl-CoA + NADH + H(+). In Rhizorhabdus wittichii (strain DSM 6014 / CCUG 31198 / JCM 15750 / NBRC 105917 / EY 4224 / RW1) (Sphingomonas wittichii), this protein is Acetaldehyde dehydrogenase 3.